A 249-amino-acid chain; its full sequence is Phosphoribosylaminoimidazole-succinocarboxamide synthase (249 aa).

Belongs to the SAICAR synthetase family.

The catalysed reaction is 5-amino-1-(5-phospho-D-ribosyl)imidazole-4-carboxylate + L-aspartate + ATP = (2S)-2-[5-amino-1-(5-phospho-beta-D-ribosyl)imidazole-4-carboxamido]succinate + ADP + phosphate + 2 H(+). The protein operates within purine metabolism; IMP biosynthesis via de novo pathway; 5-amino-1-(5-phospho-D-ribosyl)imidazole-4-carboxamide from 5-amino-1-(5-phospho-D-ribosyl)imidazole-4-carboxylate: step 1/2. The chain is Phosphoribosylaminoimidazole-succinocarboxamide synthase from Roseiflexus castenholzii (strain DSM 13941 / HLO8).